Reading from the N-terminus, the 339-residue chain is Starvation-sensing protein RspB (339 aa).

Zn(2+)-binding residues include Cys37, His59, Cys89, Cys92, Cys95, Cys103, and Glu144.

This sequence belongs to the zinc-containing alcohol dehydrogenase family. The cofactor is Zn(2+).

Its function is as follows. Not known; probable catabolic enzyme. This is Starvation-sensing protein RspB from Escherichia coli (strain K12).